The chain runs to 464 residues: MVPAVNPPTTSNHVAVIGAGAAGLVAARELRREGHSVVVFERGNHIGGVWAYTPNVEPDPLSIDPTRPVIHSSLYSSLRTIIPQECMGFTDFPFSTRLENGSRDPRRHPGHSEVLAYLRDFVREFKIEEMIRFETEVVRVEQAGENPKKWRVKSRNFGDISDEIYDAVVVCNGHYTEPRHALIPGIDTWPGKQIHSHNYRVPEQVKDQVVVVIGSSVSGVDISRDIANVTKEVHISSRSTKPETYEKLPGYDNLWLHSNIETVREDGSVVFKNGKTVYADTIMHCTGYKYYFPFLDTKGEVTVEDNRVGPLYKHVFPPALSPGLSFIGLPWQVIPFPMFELQSKWVAAVLAGRVSLPSQEEMEDTKMFYLKLEASCIPKRYTHLMAELDSQFVYNNWLADQCDYPRIEKWREQMFYKVFKRIQSQASTYKDDWDDDHLIAEAYEDFVKFPSNYPSSLIEREYTS.

18–23 contributes to the FAD binding site; sequence GAGAAG. NADP(+) is bound at residue 214–219; that stretch reads GSSVSG.

Belongs to the FMO family. It depends on FAD as a cofactor.

Functionally, catalyzes the conversion of methylthioalkyl glucosinolates of any chain length into methylsulfinylalkyl glucosinolates. The sequence is that of Flavin-containing monooxygenase FMO GS-OX-like 7 from Arabidopsis thaliana (Mouse-ear cress).